The primary structure comprises 327 residues: Polyprenyl transferase esdpC (327 aa).

A run of 8 helical transmembrane segments spans residues 35-54, 73-93, 118-138, 140-160, 171-191, 202-222, 239-259, and 307-327; these read YNPL…AGAS, LLVF…NDWI, EALI…AYTL, GHNV…YPFG, YPQY…WLAI, IMES…LNTA, VYFL…ALVL, and ENFA…LLKS.

It belongs to the UbiA prenyltransferase family. The cofactor is Mg(2+).

It is found in the membrane. It functions in the pathway secondary metabolite biosynthesis; terpenoid biosynthesis. In terms of biological role, olyprenyl transferase; part of the cluster that mediates the biosynthesis of shearones, diterpenoid pyrones (DPs) which are structurally diverse meroterpenoids consisting of a diterpene linked by a pyrone, and which may exhibit a range of bioactivities. Within the pathway, esdpC takes part to the biosynthesis of the molecular scaffold by catalyzing the C-3 geranylgeranylation reaction of the alpha-pyrone produced by esdpA. The molecular scaffold is commonly biosynthesized by a series of enzymes including the non-reducing polyketide synthase (NR-PKS) esdpA that generates an alpha-pyrone; the prenyltransferase esdpC that attaches a geranylgeranyl pyrophosphate (GGPP) produced by the GGPP synthase (GGPPS) esdpD onto the pyrone unit; the FAD-dependent monooxygenase esdpE that converts an olefin on the diterpene unit into an epoxide; and the terpene cyclase esdpB that catalyzes the cyclization reactions to give the molecular backbone shearone A. In the modification steps, esdpF oxidizes the hydroxy group to a ketone at C-3 and esdpG then attaches hydroxy groups at both C-11 and C-12. After that, esdpI hydroxylates at C-20 and esdpH hydroxylates at C-6'. The ether bridge is generated by nucleophilic attack of the hydroxy group at C-20 to the carbonyl carbon at C-3. EsdpH can also functions prior to esdpI. The different combinations of these modification enzymes lead to the production of diverse shearone derivatives, shearone I being the end product of the pathway. The alpha-ketoglutarate-dependent dioxygenase esdpJ seems not to be involved in this pathway. In Penicillium shearii (Eupenicillium shearii), this protein is Polyprenyl transferase esdpC.